A 407-amino-acid chain; its full sequence is Peptidase T (407 aa).

H78 contributes to the Zn(2+) binding site. The active site involves D80. D139 lines the Zn(2+) pocket. The Proton acceptor role is filled by E173. Zn(2+)-binding residues include E174, D196, and H378.

This sequence belongs to the peptidase M20B family. Requires Zn(2+) as cofactor.

It is found in the cytoplasm. It carries out the reaction Release of the N-terminal residue from a tripeptide.. Its function is as follows. Cleaves the N-terminal amino acid of tripeptides. The polypeptide is Peptidase T (Shewanella pealeana (strain ATCC 700345 / ANG-SQ1)).